Here is a 417-residue protein sequence, read N- to C-terminus: Gamma-glutamyl phosphate reductase (417 aa).

The protein belongs to the gamma-glutamyl phosphate reductase family.

The protein localises to the cytoplasm. The catalysed reaction is L-glutamate 5-semialdehyde + phosphate + NADP(+) = L-glutamyl 5-phosphate + NADPH + H(+). It participates in amino-acid biosynthesis; L-proline biosynthesis; L-glutamate 5-semialdehyde from L-glutamate: step 2/2. In terms of biological role, catalyzes the NADPH-dependent reduction of L-glutamate 5-phosphate into L-glutamate 5-semialdehyde and phosphate. The product spontaneously undergoes cyclization to form 1-pyrroline-5-carboxylate. This Serratia proteamaculans (strain 568) protein is Gamma-glutamyl phosphate reductase.